The primary structure comprises 442 residues: Putative zinc metalloprotease PM1991 (442 aa).

H21 is a Zn(2+) binding site. E22 is an active-site residue. Residue H25 coordinates Zn(2+). The helical transmembrane segment at 97–119 (AFVIAAGPIANFLFAILAYFTIY) threads the bilayer. One can recognise a PDZ domain in the interval 198–286 (DWRFDPEKES…FSFVVLTPEL (89 aa)). Transmembrane regions (helical) follow at residues 366 to 388 (IGLI…MNLF) and 418 to 440 (LSYR…NDFL).

This sequence belongs to the peptidase M50B family. Zn(2+) serves as cofactor.

Its subcellular location is the cell inner membrane. The chain is Putative zinc metalloprotease PM1991 from Pasteurella multocida (strain Pm70).